The primary structure comprises 221 residues: Thiamine-phosphate synthase (221 aa).

Residues 46–50 and N83 contribute to the 4-amino-2-methyl-5-(diphosphooxymethyl)pyrimidine site; that span reads QFREK. 2 residues coordinate Mg(2+): D84 and D103. S122 is a 4-amino-2-methyl-5-(diphosphooxymethyl)pyrimidine binding site. A 2-[(2R,5Z)-2-carboxy-4-methylthiazol-5(2H)-ylidene]ethyl phosphate-binding site is contributed by 149-151; it reads TQS. K152 contributes to the 4-amino-2-methyl-5-(diphosphooxymethyl)pyrimidine binding site. Residues G181 and 201 to 202 each bind 2-[(2R,5Z)-2-carboxy-4-methylthiazol-5(2H)-ylidene]ethyl phosphate; that span reads IS.

It belongs to the thiamine-phosphate synthase family. The cofactor is Mg(2+).

It carries out the reaction 2-[(2R,5Z)-2-carboxy-4-methylthiazol-5(2H)-ylidene]ethyl phosphate + 4-amino-2-methyl-5-(diphosphooxymethyl)pyrimidine + 2 H(+) = thiamine phosphate + CO2 + diphosphate. The catalysed reaction is 2-(2-carboxy-4-methylthiazol-5-yl)ethyl phosphate + 4-amino-2-methyl-5-(diphosphooxymethyl)pyrimidine + 2 H(+) = thiamine phosphate + CO2 + diphosphate. The enzyme catalyses 4-methyl-5-(2-phosphooxyethyl)-thiazole + 4-amino-2-methyl-5-(diphosphooxymethyl)pyrimidine + H(+) = thiamine phosphate + diphosphate. It participates in cofactor biosynthesis; thiamine diphosphate biosynthesis; thiamine phosphate from 4-amino-2-methyl-5-diphosphomethylpyrimidine and 4-methyl-5-(2-phosphoethyl)-thiazole: step 1/1. Functionally, condenses 4-methyl-5-(beta-hydroxyethyl)thiazole monophosphate (THZ-P) and 2-methyl-4-amino-5-hydroxymethyl pyrimidine pyrophosphate (HMP-PP) to form thiamine monophosphate (TMP). The chain is Thiamine-phosphate synthase from Actinobacillus succinogenes (strain ATCC 55618 / DSM 22257 / CCUG 43843 / 130Z).